The sequence spans 510 residues: GMP synthase [glutamine-hydrolyzing] (510 aa).

The Glutamine amidotransferase type-1 domain occupies 5–195 (TVVVLDFGGQ…LFEICGLRGD (191 aa)). C82 (nucleophile) is an active-site residue. Catalysis depends on residues H169 and E171. Residues 196–385 (WDLSDFISEA…LGIPAEILWR (190 aa)) form the GMPS ATP-PPase domain. 223–229 (SGGVDSS) contacts ATP.

As to quaternary structure, homodimer.

The catalysed reaction is XMP + L-glutamine + ATP + H2O = GMP + L-glutamate + AMP + diphosphate + 2 H(+). It participates in purine metabolism; GMP biosynthesis; GMP from XMP (L-Gln route): step 1/1. Its function is as follows. Catalyzes the synthesis of GMP from XMP. The sequence is that of GMP synthase [glutamine-hydrolyzing] from Syntrophomonas wolfei subsp. wolfei (strain DSM 2245B / Goettingen).